Consider the following 295-residue polypeptide: Protease HtpX (295 aa).

2 helical membrane passes run 4–24 and 34–54; these read IVLFLLTNLAVMLVFGIILSL and GLMIMAGLFGFGGAFVSLLMS. A Zn(2+)-binding site is contributed by histidine 139. Residue glutamate 140 is part of the active site. Residue histidine 143 participates in Zn(2+) binding. 2 helical membrane-spanning segments follow: residues 147-167 and 194-214; these read GDMVTMTLLQGIVNTFVIFIS and IVYMVASMVLEIVFGILASII. Glutamate 223 lines the Zn(2+) pocket.

The protein belongs to the peptidase M48B family. Zn(2+) serves as cofactor.

It is found in the cell inner membrane. The protein is Protease HtpX of Photorhabdus laumondii subsp. laumondii (strain DSM 15139 / CIP 105565 / TT01) (Photorhabdus luminescens subsp. laumondii).